The sequence spans 151 residues: MTGLERQLTEMLDAPVAASGYELVGLEFIRAGEHSTLRIYIDSPNGINVDDCSEVSHQVSAVMDVEDPISVAYNLEVSSPGLERPLFKAEHYQQFIGHEVSIVLKMAVGNRRKWKGDIQSIEGETVKVLVEGQEEEFVLSNIAKANLIPKF.

It belongs to the RimP family.

Its subcellular location is the cytoplasm. In terms of biological role, required for maturation of 30S ribosomal subunits. The sequence is that of Ribosome maturation factor RimP from Vibrio atlanticus (strain LGP32) (Vibrio splendidus (strain Mel32)).